Consider the following 995-residue polypeptide: Autophagy-related protein 9 (995 aa).

Polar residues predominate over residues 1–11 (MPTHNSHSQPS). The disordered stretch occupies residues 1-208 (MPTHNSHSQP…EEEPPESDAL (208 aa)). At 1-255 (MPTHNSHSQP…KGIYCIVLAR (255 aa)) the chain is on the cytoplasmic side. Over residues 69 to 91 (REPSTSRSPSHSRSRSTSPANSP) the composition is skewed to low complexity. Composition is skewed to polar residues over residues 92–106 (GHSTISALASQSGVT) and 137–147 (TALSRQTSKSP). Residues 179–191 (ERTRRKGGHKYHS) are compositionally biased toward basic residues. The helical transmembrane segment at 256–276 (VLNLLTTFFVIAFSTFLISCI) threads the bilayer. Topologically, residues 277–311 (DYSKLFSSISTAEAVGRLEDVLVAQCITKGSFAHT) are lumenal. A helical membrane pass occupies residues 312–332 (LFLIILSAFFIFQVASFAMSV). Topologically, residues 333 to 516 (PRLLDMYRFY…KDLVQGLRRR (184 aa)) are cytoplasmic. The stretch at 517–537 (FIFMGILNAIFAPFIILYLLI) is an intramembrane region. At 538–605 (YSFFRYFEEY…PKERTALVMR (68 aa)) the chain is on the cytoplasmic side. Residues 606–626 (FVAFIAGSFAAVLLVASLIDP) traverse the membrane as a helical segment. The Lumenal segment spans residues 627–638 (DLFLHFEITPHR). A helical transmembrane segment spans residues 639-659 (TVLFYLGVFGSILAISRGMVP). The Cytoplasmic segment spans residues 660–705 (QENMVFDPEASLNEVVRWTHYLPVEWRGQLHSQMVHQEFSKLFALK). An intramembrane segment occupies 706-726 (IMIFFSELLSVILTPFILFFS). Residues 727–995 (LPPCAAAIID…VGLLQQVLGR (269 aa)) are Cytoplasmic-facing. Disordered regions lie at residues 771–817 (ETGL…DWRG) and 914–978 (WAKS…ERER). Over residues 783-808 (GPAADGFAAGKPSRPTTRRTTSSSPS) the composition is skewed to low complexity. The segment covering 949 to 968 (EGDKGDDSIDGWSKRVKTDG) has biased composition (basic and acidic residues).

It belongs to the ATG9 family. In terms of assembly, homotrimer; forms a homotrimer with a central pore that forms a path between the two membrane leaflets. Phosphorylated by ATG1. ATG1 phosphorylation is required for preautophagosome elongation.

Its subcellular location is the preautophagosomal structure membrane. It is found in the cytoplasmic vesicle membrane. The protein localises to the golgi apparatus membrane. It localises to the endoplasmic reticulum membrane. It carries out the reaction a 1,2-diacyl-sn-glycero-3-phosphocholine(in) = a 1,2-diacyl-sn-glycero-3-phosphocholine(out). It catalyses the reaction a 1,2-diacyl-sn-glycero-3-phospho-L-serine(in) = a 1,2-diacyl-sn-glycero-3-phospho-L-serine(out). The catalysed reaction is a 1,2-diacyl-sn-glycero-3-phosphoethanolamine(in) = a 1,2-diacyl-sn-glycero-3-phosphoethanolamine(out). The enzyme catalyses a 1,2-diacyl-sn-glycero-3-phospho-(1D-myo-inositol-3-phosphate)(in) = a 1,2-diacyl-sn-glycero-3-phospho-(1D-myo-inositol-3-phosphate)(out). Phospholipid scramblase involved in autophagy and cytoplasm to vacuole transport (Cvt) vesicle formation. Cycles between the preautophagosomal structure/phagophore assembly site (PAS) and the cytoplasmic vesicle pool and supplies membrane for the growing autophagosome. Lipid scramblase activity plays a key role in preautophagosomal structure/phagophore assembly by distributing the phospholipids that arrive through ATG2 from the cytoplasmic to the luminal leaflet of the bilayer, thereby driving autophagosomal membrane expansion. Required for mitophagy. Also involved in endoplasmic reticulum-specific autophagic process and is essential for the survival of cells subjected to severe ER stress. Different machineries are required for anterograde trafficking to the PAS during either the Cvt pathway or bulk autophagy and for retrograde trafficking. This is Autophagy-related protein 9 (ATG9) from Cryptococcus neoformans var. neoformans serotype D (strain JEC21 / ATCC MYA-565) (Filobasidiella neoformans).